Reading from the N-terminus, the 174-residue chain is Nucleoside-triphosphatase THEP1 (174 aa).

Residues 7 to 14 (GRPGVGKT) and 94 to 101 (LIIVDEIG) contribute to the ATP site.

This sequence belongs to the THEP1 NTPase family.

The catalysed reaction is a ribonucleoside 5'-triphosphate + H2O = a ribonucleoside 5'-diphosphate + phosphate + H(+). Its function is as follows. Has nucleotide phosphatase activity towards ATP, GTP, CTP, TTP and UTP. May hydrolyze nucleoside diphosphates with lower efficiency. This Thermotoga maritima (strain ATCC 43589 / DSM 3109 / JCM 10099 / NBRC 100826 / MSB8) protein is Nucleoside-triphosphatase THEP1.